Here is a 481-residue protein sequence, read N- to C-terminus: Anti-sigma-I factor RsgI5 (481 aa).

Topologically, residues 1 to 50 are cytoplasmic; it reads MKHKGIVLKLTKSKAIISTNDFQCYYIKRSPTIYVGKEVEFTNKDIVTKK. Residues 3–50 enclose the RsgI N-terminal anti-sigma domain; sequence HKGIVLKLTKSKAIISTNDFQCYYIKRSPTIYVGKEVEFTNKDIVTKK. A helical membrane pass occupies residues 51-71; sequence SVLIKPALSVACFILLIACVL. Residues 72–481 lie on the Extracellular side of the membrane; sequence SLSKIINNIS…DATFIGIKVD (410 aa). Residues 255–339 form a disordered region; sequence ASEERNPEES…TPTPTPTPAD (85 aa). Residues 256-265 show a composition bias toward basic and acidic residues; that stretch reads SEERNPEESP. 2 stretches are compositionally biased toward low complexity: residues 266 to 283 and 291 to 315; these read KMTP…TPTD and NTPT…TSTP. The span at 316 to 336 shows a compositional bias: pro residues; the sequence is APKPTSTPTPTLMPTPTPTPT.

In terms of assembly, interacts (via RsgI N-terminal anti-sigma domain) with SigI5.

The protein localises to the cell membrane. Anti-sigma factor for SigI5. Negatively regulates SigI5 activity through direct interaction. Binding of the polysaccharide substrate to the extracellular C-terminal sensing domain of RsgI5 may induce a conformational change in its N-terminal cytoplasmic region, leading to the release and activation of SigI5. This chain is Anti-sigma-I factor RsgI5, found in Acetivibrio thermocellus (strain ATCC 27405 / DSM 1237 / JCM 9322 / NBRC 103400 / NCIMB 10682 / NRRL B-4536 / VPI 7372) (Clostridium thermocellum).